A 195-amino-acid polypeptide reads, in one-letter code: Pyridoxal 5'-phosphate synthase subunit PdxT (195 aa).

46 to 48 (GES) lines the L-glutamine pocket. The active-site Nucleophile is the C78. Residues R106 and 134-135 (IR) each bind L-glutamine. Catalysis depends on charge relay system residues H170 and E172.

Belongs to the glutaminase PdxT/SNO family. In the presence of PdxS, forms a dodecamer of heterodimers. Only shows activity in the heterodimer.

The enzyme catalyses aldehydo-D-ribose 5-phosphate + D-glyceraldehyde 3-phosphate + L-glutamine = pyridoxal 5'-phosphate + L-glutamate + phosphate + 3 H2O + H(+). It catalyses the reaction L-glutamine + H2O = L-glutamate + NH4(+). Its pathway is cofactor biosynthesis; pyridoxal 5'-phosphate biosynthesis. Catalyzes the hydrolysis of glutamine to glutamate and ammonia as part of the biosynthesis of pyridoxal 5'-phosphate. The resulting ammonia molecule is channeled to the active site of PdxS. The sequence is that of Pyridoxal 5'-phosphate synthase subunit PdxT from Pseudothermotoga lettingae (strain ATCC BAA-301 / DSM 14385 / NBRC 107922 / TMO) (Thermotoga lettingae).